The primary structure comprises 91 residues: Translation initiation factor IF-1 (91 aa).

In terms of domain architecture, S1-like spans 1 to 72 (MAKEELLEFE…DRGRINFRHK (72 aa)). The tract at residues 70–91 (RHKAEGNAPPPGARRQQNFRRR) is disordered.

Belongs to the IF-1 family. As to quaternary structure, component of the 30S ribosomal translation pre-initiation complex which assembles on the 30S ribosome in the order IF-2 and IF-3, IF-1 and N-formylmethionyl-tRNA(fMet); mRNA recruitment can occur at any time during PIC assembly.

Its subcellular location is the cytoplasm. One of the essential components for the initiation of protein synthesis. Stabilizes the binding of IF-2 and IF-3 on the 30S subunit to which N-formylmethionyl-tRNA(fMet) subsequently binds. Helps modulate mRNA selection, yielding the 30S pre-initiation complex (PIC). Upon addition of the 50S ribosomal subunit IF-1, IF-2 and IF-3 are released leaving the mature 70S translation initiation complex. This is Translation initiation factor IF-1 from Azorhizobium caulinodans (strain ATCC 43989 / DSM 5975 / JCM 20966 / LMG 6465 / NBRC 14845 / NCIMB 13405 / ORS 571).